Here is a 136-residue protein sequence, read N- to C-terminus: MVDVEMFGCGGLLVSHLHKFGTERACLRGDGAVFPAVEIGLDQLQVPGRLFDGWNHVLFRSDEDDRFGDRVQHVARDERPQQMRLAGSGGSVDDPDDGLLAHVDGRQLSVLEVATVHLFLGFNFFVGFEKLLINAP.

This is an uncharacterized protein from Fowl adenovirus A serotype 1 (strain CELO / Phelps) (FAdV-1).